A 247-amino-acid chain; its full sequence is ATP synthase subunit a, chloroplastic (247 aa).

5 consecutive transmembrane segments (helical) span residues 38–58 (QVLITSWVVIAILLGSAAIAV), 95–115 (VPFIGTMFLFIFVSNWSGALL), 134–154 (INTTVALALLTSAAYFYAGLT), 199–219 (LVVVVLVSLVPLVVPIPVMFL), and 220–240 (GLFTSGIQALIFATLAAAYIG).

It belongs to the ATPase A chain family. In terms of assembly, F-type ATPases have 2 components, CF(1) - the catalytic core - and CF(0) - the membrane proton channel. CF(1) has five subunits: alpha(3), beta(3), gamma(1), delta(1), epsilon(1). CF(0) has four main subunits: a, b, b' and c.

The protein localises to the plastid. It is found in the chloroplast thylakoid membrane. Key component of the proton channel; it plays a direct role in the translocation of protons across the membrane. The sequence is that of ATP synthase subunit a, chloroplastic from Ceratophyllum demersum (Rigid hornwort).